Here is a 276-residue protein sequence, read N- to C-terminus: Secreted RxLR effector protein 150 (276 aa).

The first 18 residues, M1–C18, serve as a signal peptide directing secretion. Positions R49 to R64 match the RxLR-dEER motif.

The protein belongs to the RxLR effector family.

The protein localises to the secreted. The protein resides in the host nucleus. Its subcellular location is the host cytoplasm. Secreted effector that partially suppresses the host cell death induced by cell death-inducing proteins. In Plasmopara viticola (Downy mildew of grapevine), this protein is Secreted RxLR effector protein 150.